Reading from the N-terminus, the 211-residue chain is MGLIDISVKPQTEQCSEVLRTAGRLGYTAVAIPPESADECMSLEGDGIPRLYRRGYVEASTRRDVRRAAEKLAGVVDFIVVKPLTLEAARYAAANKRVHIIRVDGSNLWAADRGTAEIMAQRGWGALEVSLRNLTLNPGSPAAWRALAVVLRRSFAYGVHVFLASDAEEPHELWSPYSGASLAALLGVPWSHAMLYNSEERLRILLDASRA.

This sequence belongs to the eukaryotic/archaeal RNase P protein component 3 family. In terms of assembly, consists of a catalytic RNA component and at least 4-5 protein subunits.

It localises to the cytoplasm. The catalysed reaction is Endonucleolytic cleavage of RNA, removing 5'-extranucleotides from tRNA precursor.. Functionally, part of ribonuclease P, a protein complex that generates mature tRNA molecules by cleaving their 5'-ends. The polypeptide is Ribonuclease P protein component 3 (Aeropyrum pernix (strain ATCC 700893 / DSM 11879 / JCM 9820 / NBRC 100138 / K1)).